A 1289-amino-acid polypeptide reads, in one-letter code: DNA-directed RNA polymerase subunit beta (1289 aa).

It belongs to the RNA polymerase beta chain family. As to quaternary structure, the RNAP catalytic core consists of 2 alpha, 1 beta, 1 beta' and 1 omega subunit. When a sigma factor is associated with the core the holoenzyme is formed, which can initiate transcription.

The enzyme catalyses RNA(n) + a ribonucleoside 5'-triphosphate = RNA(n+1) + diphosphate. Functionally, DNA-dependent RNA polymerase catalyzes the transcription of DNA into RNA using the four ribonucleoside triphosphates as substrates. The polypeptide is DNA-directed RNA polymerase subunit beta (Methylacidiphilum infernorum (isolate V4) (Methylokorus infernorum (strain V4))).